Consider the following 417-residue polypeptide: Gamma-glutamyl phosphate reductase (417 aa).

The protein belongs to the gamma-glutamyl phosphate reductase family.

It localises to the cytoplasm. The catalysed reaction is L-glutamate 5-semialdehyde + phosphate + NADP(+) = L-glutamyl 5-phosphate + NADPH + H(+). Its pathway is amino-acid biosynthesis; L-proline biosynthesis; L-glutamate 5-semialdehyde from L-glutamate: step 2/2. Catalyzes the NADPH-dependent reduction of L-glutamate 5-phosphate into L-glutamate 5-semialdehyde and phosphate. The product spontaneously undergoes cyclization to form 1-pyrroline-5-carboxylate. This is Gamma-glutamyl phosphate reductase from Escherichia coli (strain 55989 / EAEC).